The following is a 573-amino-acid chain: Threonine--tRNA ligase (573 aa).

The interval 174-474 (DHRRINKILE…LLEQTKGALD (301 aa)) is catalytic. Zn(2+) is bound by residues C268, H319, and H451.

Belongs to the class-II aminoacyl-tRNA synthetase family. Homodimer. Requires Zn(2+) as cofactor.

Its subcellular location is the cytoplasm. The catalysed reaction is tRNA(Thr) + L-threonine + ATP = L-threonyl-tRNA(Thr) + AMP + diphosphate + H(+). Catalyzes the attachment of threonine to tRNA(Thr) in a two-step reaction: L-threonine is first activated by ATP to form Thr-AMP and then transferred to the acceptor end of tRNA(Thr). Also edits incorrectly charged L-seryl-tRNA(Thr). This is Threonine--tRNA ligase from Mycoplasmoides gallisepticum (strain R(low / passage 15 / clone 2)) (Mycoplasma gallisepticum).